The chain runs to 529 residues: UPF0159 protein TC_0921 (529 aa).

2 consecutive ThyX domains span residues lysine 38–histidine 274 and lysine 309–valine 511.

It belongs to the UPF0159 family.

This chain is UPF0159 protein TC_0921, found in Chlamydia muridarum (strain MoPn / Nigg).